Consider the following 273-residue polypeptide: HTH-type transcriptional activator RhaS (273 aa).

The HTH araC/xylS-type domain occupies 174–272 (YQLLDWLQNN…SQSPRDLRSQ (99 aa)). DNA-binding regions (H-T-H motif) lie at residues 191 to 212 (PELA…KNKT) and 239 to 262 (VTDI…KREF).

As to quaternary structure, binds DNA as a dimer.

The protein localises to the cytoplasm. Activates expression of the rhaBAD and rhaT operons. In Yersinia pestis bv. Antiqua (strain Antiqua), this protein is HTH-type transcriptional activator RhaS.